The sequence spans 240 residues: 45 kDa antigen (240 aa).

Fibronectin type-III domains lie at Glu-1 to Leu-109 and Ala-110 to His-210.

This is 45 kDa antigen from Taenia ovis (Sheep tapeworm).